A 1304-amino-acid chain; its full sequence is Myosin-1 (1304 aa).

Residues 1 to 12 (MAIVKRGVRTKN) show a composition bias toward basic residues. Residues 1–24 (MAIVKRGVRTKNKQSQQPSKSGIK) are disordered. The Myosin motor domain occupies 36 to 730 (VGVSDLTLLS…TLFALEDMRD (695 aa)). 129–136 (GESGAGKT) serves as a coordination point for ATP. Ser364 is modified (phosphoserine). The tract at residues 413-496 (SIGILDIYGF…PGLFAALNDS (84 aa)) is actin-binding. 2 IQ domains span residues 734–754 (HNMA…KDDA) and 755–780 (ARLI…YGNG). A TH1 domain is found at 788–978 (RRRMSMLGSR…TVTVRQGLPG (191 aa)). Disordered stretches follow at residues 963–1162 (DSYK…TYKA) and 1214–1304 (ECDP…DDDW). Composition is skewed to polar residues over residues 964–983 (SYKS…SQNP) and 1001–1012 (RGSNMRSTSSYQ). Composition is skewed to low complexity over residues 1029–1052 (QPPV…PQAQ), 1072–1096 (QPHA…PQAQ), and 1120–1140 (PSAP…KKNV). The segment covering 1141-1156 (APPPPPAAASPPPKPK) has biased composition (pro residues). The SH3 domain occupies 1155–1217 (PKFPTYKAAY…PAAYVVECDP (63 aa)). Composition is skewed to low complexity over residues 1217–1227 (PPANSPAGNAK) and 1236–1256 (LNSA…NGAG). A compositionally biased stretch (acidic residues) spans 1292 to 1304 (DSDEEDEEDDDDW).

It belongs to the TRAFAC class myosin-kinesin ATPase superfamily. Myosin family. Phosphorylation of the TEDS site (Ser-364) is required for the polarization of the actin cytoskeleton. Phosphorylation probably activates the myosin-I ATPase activity.

It is found in the cytoplasm. The protein localises to the cytoskeleton. Its subcellular location is the actin patch. Its function is as follows. Type-I myosin implicated in the organization of the actin cytoskeleton. Required for proper actin cytoskeleton polarization. At the cell cortex, assembles in patch-like structures together with proteins from the actin-polymerizing machinery and promotes actin assembly. Functions as actin nucleation-promoting factor (NPF) for the Arp2/3 complex. The protein is Myosin-1 (MYO1) of Debaryomyces hansenii (strain ATCC 36239 / CBS 767 / BCRC 21394 / JCM 1990 / NBRC 0083 / IGC 2968) (Yeast).